We begin with the raw amino-acid sequence, 628 residues long: tRNA uridine 5-carboxymethylaminomethyl modification enzyme MnmG 1 (628 aa).

11–16 contacts FAD; it reads GAGHAG. 280–294 lines the NAD(+) pocket; it reads GPRHCPSIDRKVLNF.

Belongs to the MnmG family. As to quaternary structure, homodimer. Heterotetramer of two MnmE and two MnmG subunits. The cofactor is FAD.

It is found in the cytoplasm. Its function is as follows. NAD-binding protein involved in the addition of a carboxymethylaminomethyl (cmnm) group at the wobble position (U34) of certain tRNAs, forming tRNA-cmnm(5)s(2)U34. The polypeptide is tRNA uridine 5-carboxymethylaminomethyl modification enzyme MnmG 1 (Fusobacterium nucleatum subsp. nucleatum (strain ATCC 25586 / DSM 15643 / BCRC 10681 / CIP 101130 / JCM 8532 / KCTC 2640 / LMG 13131 / VPI 4355)).